The following is a 186-amino-acid chain: Temperature-induced lipocalin-1 (186 aa).

Positions 90-97 match the HPR (Hydrophobic proline-rich) motif; the sequence is PPFLPIIP. A disordered region spans residues 154–174; that stretch reads KLHKTPQSDTPPESNTAPEDS. Residues 158–171 are compositionally biased toward polar residues; the sequence is TPQSDTPPESNTAP.

It belongs to the calycin superfamily. Lipocalin family. As to expression, expressed ubiquitously at similar levels, except in dry seeds (at protein level). Present in seeds.

The protein localises to the cell membrane. It is found in the cytoplasm. Its subcellular location is the plastid. It localises to the chloroplast membrane. Involved in basal (BT) and acquired thermotolerance (AT), probably by preventing plasma membrane lipids peroxidation induced by severe heat-shock (HS). Lipocalin that confers protection against oxidative stress caused by heat, freezing, paraquat and light. Confers resistance to high salt (NaCl) levels, probably by protecting chloroplasts from ion toxicity via ion homeostasis maintenance. Required for seed longevity by ensuring polyunsaturated lipids integrity. The protein is Temperature-induced lipocalin-1 of Arabidopsis thaliana (Mouse-ear cress).